The following is an 871-amino-acid chain: DNA mismatch repair protein MutS (871 aa).

617 to 624 lines the ATP pocket; the sequence is GPNMGGKS.

Belongs to the DNA mismatch repair MutS family.

Functionally, this protein is involved in the repair of mismatches in DNA. It is possible that it carries out the mismatch recognition step. This protein has a weak ATPase activity. The polypeptide is DNA mismatch repair protein MutS (Hydrogenovibrio crunogenus (strain DSM 25203 / XCL-2) (Thiomicrospira crunogena)).